Reading from the N-terminus, the 139-residue chain is ATP synthase epsilon chain 2 (139 aa).

This sequence belongs to the ATPase epsilon chain family. F-type ATPases have 2 components, CF(1) - the catalytic core - and CF(0) - the membrane proton channel. CF(1) has five subunits: alpha(3), beta(3), gamma(1), delta(1), epsilon(1). CF(0) has three main subunits: a, b and c.

The protein resides in the cell inner membrane. In terms of biological role, produces ATP from ADP in the presence of a proton gradient across the membrane. In Paraburkholderia xenovorans (strain LB400), this protein is ATP synthase epsilon chain 2.